The following is a 465-amino-acid chain: Probable inactive receptor-like kinase BSK12 (465 aa).

Positions 1–12 (MGCCYSLSSTVD) are enriched in polar residues. Residues 1–34 (MGCCYSLSSTVDPVQDHTTDASSEPRNGGGEDPP) are disordered. G2 carries N-myristoyl glycine lipidation. 2 S-palmitoyl cysteine lipidation sites follow: C3 and C4. Residues 50 to 291 (FSPENIVSDQ…KEIVATLETL (242 aa)) form the Protein kinase domain. ATP is bound by residues 56–64 (VSDQTSDVV) and K78.

The protein belongs to the protein kinase superfamily. Ser/Thr protein kinase family. As to quaternary structure, interacts with YDA. Post-translationally, diacylation-mediated membrane association is essential for BSK12 function. In terms of tissue distribution, expressed at the mRNA level in the sperm cells in mature pollen, but the protein is only detectable in the zygote and the micropylar endosperm upon fertilization.

The protein localises to the cell membrane. Probable inactive protein kinase that activates the YODA MAP kinase cascade, which regulates the asymmetric first division and embryo polarity, by promoting the elongation of the zygote and the development of its basal daughter cell into the extra-embryonic suspensor. Acts as an adapter at the plasma membrane, possibly by recruiting and binding an activator. The sequence is that of Probable inactive receptor-like kinase BSK12 from Arabidopsis thaliana (Mouse-ear cress).